Here is a 490-residue protein sequence, read N- to C-terminus: Gram-negative bacteria-binding protein 3 (490 aa).

Positions 1 to 25 (MADALRFVAWSCCLQLLFLLLGVQG) are cleaved as a signal peptide. Positions 26 to 126 (YEVPKAKIDV…GSFVVNGYSG (101 aa)) constitute a CBM39 domain. One can recognise a GH16 domain in the interval 162-490 (TEVNGAPTRC…KIDYVKVYSL (329 aa)). N-linked (GlcNAc...) asparagine glycosylation is found at N362 and N373.

Belongs to the insect beta-1,3-glucan binding protein family.

It is found in the secreted. Involved in the recognition of invading microorganisms. Binds specifically to beta-1,3-glucan and activates the phenoloxidase cascade. The sequence is that of Gram-negative bacteria-binding protein 3 from Drosophila melanogaster (Fruit fly).